A 300-amino-acid polypeptide reads, in one-letter code: Ornithine carbamoyltransferase (300 aa).

Carbamoyl phosphate is bound by residues serine 50–threonine 53, glutamine 77, arginine 101, and histidine 128–glutamine 131. Residues asparagine 159, aspartate 219, and serine 223 to methionine 224 contribute to the L-ornithine site. Carbamoyl phosphate contacts are provided by residues cysteine 257–leucine 258 and arginine 285.

The protein belongs to the aspartate/ornithine carbamoyltransferase superfamily. OTCase family.

It localises to the cytoplasm. It catalyses the reaction carbamoyl phosphate + L-ornithine = L-citrulline + phosphate + H(+). Its pathway is amino-acid degradation; L-arginine degradation via ADI pathway; carbamoyl phosphate from L-arginine: step 2/2. In terms of biological role, reversibly catalyzes the transfer of the carbamoyl group from carbamoyl phosphate (CP) to the N(epsilon) atom of ornithine (ORN) to produce L-citrulline. This chain is Ornithine carbamoyltransferase, found in Haloquadratum walsbyi (strain DSM 16790 / HBSQ001).